Here is a 389-residue protein sequence, read N- to C-terminus: Acetylornithine aminotransferase (389 aa).

Pyridoxal 5'-phosphate is bound by residues 96 to 97 (GT) and phenylalanine 123. Residue arginine 126 participates in N(2)-acetyl-L-ornithine binding. Residue 207–210 (DEVQ) participates in pyridoxal 5'-phosphate binding. N6-(pyridoxal phosphate)lysine is present on lysine 236. Serine 264 is a N(2)-acetyl-L-ornithine binding site. Position 265 (threonine 265) interacts with pyridoxal 5'-phosphate.

Belongs to the class-III pyridoxal-phosphate-dependent aminotransferase family. ArgD subfamily. Homodimer. It depends on pyridoxal 5'-phosphate as a cofactor.

Its subcellular location is the cytoplasm. The catalysed reaction is N(2)-acetyl-L-ornithine + 2-oxoglutarate = N-acetyl-L-glutamate 5-semialdehyde + L-glutamate. It functions in the pathway amino-acid biosynthesis; L-arginine biosynthesis; N(2)-acetyl-L-ornithine from L-glutamate: step 4/4. This is Acetylornithine aminotransferase from Lactiplantibacillus plantarum (strain ATCC BAA-793 / NCIMB 8826 / WCFS1) (Lactobacillus plantarum).